A 531-amino-acid chain; its full sequence is Probable rhamnogalacturonate lyase A (531 aa).

The signal sequence occupies residues 1–20 (MLSKTSLLSLLSLAAGVVNA). 2 cysteine pairs are disulfide-bonded: C50–C93 and C184–C193.

The protein belongs to the polysaccharide lyase 4 family.

The protein localises to the secreted. The catalysed reaction is Endotype eliminative cleavage of L-alpha-rhamnopyranosyl-(1-&gt;4)-alpha-D-galactopyranosyluronic acid bonds of rhamnogalacturonan I domains in ramified hairy regions of pectin leaving L-rhamnopyranose at the reducing end and 4-deoxy-4,5-unsaturated D-galactopyranosyluronic acid at the non-reducing end.. Its function is as follows. Pectinolytic enzymes consist of four classes of enzymes: pectin lyase, polygalacturonase, pectin methylesterase and rhamnogalacturonase. Degrades the rhamnogalacturonan I (RG-I) backbone of pectin. The polypeptide is Probable rhamnogalacturonate lyase A (rglA) (Aspergillus niger (strain ATCC MYA-4892 / CBS 513.88 / FGSC A1513)).